The chain runs to 141 residues: Large ribosomal subunit protein uL11c (141 aa).

It belongs to the universal ribosomal protein uL11 family. In terms of assembly, part of the ribosomal stalk of the 50S ribosomal subunit. Interacts with L10 and the large rRNA to form the base of the stalk. L10 forms an elongated spine to which L12 dimers bind in a sequential fashion forming a multimeric L10(L12)X complex.

The protein localises to the plastid. The protein resides in the chloroplast. In terms of biological role, forms part of the ribosomal stalk which helps the ribosome interact with GTP-bound translation factors. The protein is Large ribosomal subunit protein uL11c of Thalassiosira pseudonana (Marine diatom).